Here is a 118-residue protein sequence, read N- to C-terminus: MATTLRDILDKLLGRQPASAKTARERLQLVLAHDRSDLSPELLDQMRREIFEVVAKYVEIDLEEGEVSLETEDRMTALVANLPIKRSQAKAVSSQENGASSQEAVSSQESVSTPGAME.

A disordered region spans residues 86 to 118 (RSQAKAVSSQENGASSQEAVSSQESVSTPGAME). Low complexity predominate over residues 99-112 (ASSQEAVSSQESVS).

This sequence belongs to the MinE family.

Functionally, prevents the cell division inhibition by proteins MinC and MinD at internal division sites while permitting inhibition at polar sites. This ensures cell division at the proper site by restricting the formation of a division septum at the midpoint of the long axis of the cell. The chain is Cell division topological specificity factor from Prochlorococcus marinus (strain MIT 9313).